We begin with the raw amino-acid sequence, 530 residues long: Metal transporter Nramp5 (530 aa).

Residues 1–10 (MTGSTVSRQE) show a composition bias toward polar residues. Residues 1–53 (MTGSTVSRQENSPKRPNDSNGEFKRLLVPETSQPEEDELHESPPENQILNVEE) form a disordered region. The segment covering 11–27 (NSPKRPNDSNGEFKRLL) has biased composition (basic and acidic residues). Helical transmembrane passes span 65–85 (FSWA…IAFL), 98–118 (AVAG…GLLM), 147–167 (ILLW…EVIG), 179–199 (FLPI…ISYL), 207–227 (LEGL…WMFN), 253–273 (AVGV…SALV), 299–319 (AALF…AKGF), 341–361 (YGGG…AAGQ), 387–407 (LSAF…AIMF), 429–449 (IPFA…MGVF), 458–478 (LAWT…LDFF), and 485–505 (FLVG…IIYL).

Belongs to the NRAMP (TC 2.A.55) family.

The protein resides in the membrane. Functionally, seems to be involved in iron uptake. The polypeptide is Metal transporter Nramp5 (NRAMP5) (Arabidopsis thaliana (Mouse-ear cress)).